The following is a 573-amino-acid chain: Formate--tetrahydrofolate ligase 3 (573 aa).

Thr-66–Thr-73 provides a ligand contact to ATP.

This sequence belongs to the formate--tetrahydrofolate ligase family.

It carries out the reaction (6S)-5,6,7,8-tetrahydrofolate + formate + ATP = (6R)-10-formyltetrahydrofolate + ADP + phosphate. Its pathway is one-carbon metabolism; tetrahydrofolate interconversion. The chain is Formate--tetrahydrofolate ligase 3 from Rubrobacter xylanophilus (strain DSM 9941 / JCM 11954 / NBRC 16129 / PRD-1).